A 66-amino-acid polypeptide reads, in one-letter code: Beta-toxin Cbo2 (66 aa).

One can recognise an LCN-type CS-alpha/beta domain in the interval 1-66 (KEGYIVNYHD…VWPLPKKTCN (66 aa)). Disulfide bonds link Cys-12–Cys-65, Cys-16–Cys-41, Cys-25–Cys-46, and Cys-29–Cys-48. Position 66 is an asparagine amide (Asn-66).

Belongs to the long (4 C-C) scorpion toxin superfamily. Sodium channel inhibitor family. Beta subfamily. Expressed by the venom gland.

Its subcellular location is the secreted. Its function is as follows. Beta toxins bind voltage-independently at site-4 of sodium channels and shift the voltage of activation toward more negative potentials thereby affecting sodium channel activation and promoting spontaneous and repetitive firing. A mixture of Cbo2 and Cbo3 is weakly active on the human voltage-gated sodium channels Nav1.4/SCN4A and Nav1.6/SCN8A when tested at 200 nM. In vivo, is toxic to mice when intraperitoneally injected. The polypeptide is Beta-toxin Cbo2 (Centruroides bonito (Scorpion)).